The following is a 63-amino-acid chain: Large ribosomal subunit protein eL29 (63 aa).

Basic residues predominate over residues 1–26 (MAKSKNHTAHNQTRKAHRNGIKKPKT). The interval 1–35 (MAKSKNHTAHNQTRKAHRNGIKKPKTYKYPSLKGV) is disordered.

It belongs to the eukaryotic ribosomal protein eL29 family. As to quaternary structure, component of the large ribosomal subunit. Mature ribosomes consist of a small (40S) and a large (60S) subunit. The 40S subunit contains about 32 different proteins and 1 molecule of RNA (18S). The 60S subunit contains 45 different proteins and 3 molecules of RNA (25S, 5.8S and 5S).

Its subcellular location is the cytoplasm. Component of the ribosome, a large ribonucleoprotein complex responsible for the synthesis of proteins in the cell. The small ribosomal subunit (SSU) binds messenger RNAs (mRNAs) and translates the encoded message by selecting cognate aminoacyl-transfer RNA (tRNA) molecules. The large subunit (LSU) contains the ribosomal catalytic site termed the peptidyl transferase center (PTC), which catalyzes the formation of peptide bonds, thereby polymerizing the amino acids delivered by tRNAs into a polypeptide chain. The nascent polypeptides leave the ribosome through a tunnel in the LSU and interact with protein factors that function in enzymatic processing, targeting, and the membrane insertion of nascent chains at the exit of the ribosomal tunnel. The polypeptide is Large ribosomal subunit protein eL29 (Candida albicans (strain SC5314 / ATCC MYA-2876) (Yeast)).